The following is a 77-amino-acid chain: Translation initiation factor IF-1, chloroplastic (77 aa).

In terms of domain architecture, S1-like spans 1 to 71; sequence MKEQKLIHEG…TRGRIIYRLR (71 aa).

The protein belongs to the IF-1 family. In terms of assembly, component of the 30S ribosomal translation pre-initiation complex which assembles on the 30S ribosome in the order IF-2 and IF-3, IF-1 and N-formylmethionyl-tRNA(fMet); mRNA recruitment can occur at any time during PIC assembly.

Its subcellular location is the plastid. The protein resides in the chloroplast. Functionally, one of the essential components for the initiation of protein synthesis. Stabilizes the binding of IF-2 and IF-3 on the 30S subunit to which N-formylmethionyl-tRNA(fMet) subsequently binds. Helps modulate mRNA selection, yielding the 30S pre-initiation complex (PIC). Upon addition of the 50S ribosomal subunit IF-1, IF-2 and IF-3 are released leaving the mature 70S translation initiation complex. This is Translation initiation factor IF-1, chloroplastic from Asarum canadense (Wild ginger).